An 88-amino-acid polypeptide reads, in one-letter code: HssA/B-like protein 11 (88 aa).

The protein belongs to the hssA/B family.

The protein is HssA/B-like protein 11 (hssl11) of Dictyostelium discoideum (Social amoeba).